The sequence spans 122 residues: Photosystem II extrinsic protein U (122 aa).

An N-terminal signal peptide occupies residues 1–30 (MRWLLSILVRVVLVLCLCFAPLGIPVVARA).

It belongs to the PsbU family. PSII is composed of 1 copy each of membrane proteins PsbA, PsbB, PsbC, PsbD, PsbE, PsbF, PsbH, PsbI, PsbJ, PsbK, PsbL, PsbM, PsbT, PsbX, PsbY, PsbZ, Psb30/Ycf12, peripheral proteins PsbO, CyanoQ (PsbQ), PsbU, PsbV and a large number of cofactors. It forms dimeric complexes.

The protein localises to the cellular thylakoid membrane. Its function is as follows. One of the extrinsic, lumenal subunits of photosystem II (PSII). PSII is a light-driven water plastoquinone oxidoreductase, using light energy to abstract electrons from H(2)O, generating a proton gradient subsequently used for ATP formation. The extrinsic proteins stabilize the structure of photosystem II oxygen-evolving complex (OEC), the ion environment of oxygen evolution and protect the OEC against heat-induced inactivation. This is Photosystem II extrinsic protein U from Synechococcus sp. (strain JA-2-3B'a(2-13)) (Cyanobacteria bacterium Yellowstone B-Prime).